The following is a 101-amino-acid chain: Urease subunit gamma (101 aa).

It belongs to the urease gamma subunit family. Heterotrimer of UreA (gamma), UreB (beta) and UreC (alpha) subunits. Three heterotrimers associate to form the active enzyme.

It localises to the cytoplasm. The enzyme catalyses urea + 2 H2O + H(+) = hydrogencarbonate + 2 NH4(+). It functions in the pathway nitrogen metabolism; urea degradation; CO(2) and NH(3) from urea (urease route): step 1/1. This Corynebacterium kroppenstedtii (strain DSM 44385 / JCM 11950 / CIP 105744 / CCUG 35717) protein is Urease subunit gamma.